The primary structure comprises 491 residues: Glutamyl-tRNA(Gln) amidotransferase subunit A (491 aa).

Catalysis depends on charge relay system residues Lys77 and Ser152. The active-site Acyl-ester intermediate is the Ser176.

It belongs to the amidase family. GatA subfamily. Heterotrimer of A, B and C subunits.

It catalyses the reaction L-glutamyl-tRNA(Gln) + L-glutamine + ATP + H2O = L-glutaminyl-tRNA(Gln) + L-glutamate + ADP + phosphate + H(+). Allows the formation of correctly charged Gln-tRNA(Gln) through the transamidation of misacylated Glu-tRNA(Gln) in organisms which lack glutaminyl-tRNA synthetase. The reaction takes place in the presence of glutamine and ATP through an activated gamma-phospho-Glu-tRNA(Gln). This Chlamydia abortus (strain DSM 27085 / S26/3) (Chlamydophila abortus) protein is Glutamyl-tRNA(Gln) amidotransferase subunit A.